The chain runs to 202 residues: MLVETGFCRVGQAGLELLSSSDKAAGLDLPKCWDYRHEPPRLAPLLIFNPHPSTVLSCNCEYNSFFEFCDSLQQIVIPERVLGTPRHIFPLPLLFSHFLWSKLKEAPACLLQGSSEHTEIICDLISSSKQFIKKFLSNKPSALHGGDADENDFLQLITRLQKLLFKSLSMYVCVHIHQHTHACPQLSCLHQNQDEELFYCQN.

This is an uncharacterized protein from Homo sapiens (Human).